A 342-amino-acid polypeptide reads, in one-letter code: N-acetyl-gamma-glutamyl-phosphate reductase (342 aa).

Cys147 is an active-site residue.

It belongs to the NAGSA dehydrogenase family. Type 1 subfamily.

It is found in the cytoplasm. The catalysed reaction is N-acetyl-L-glutamate 5-semialdehyde + phosphate + NADP(+) = N-acetyl-L-glutamyl 5-phosphate + NADPH + H(+). Its pathway is amino-acid biosynthesis; L-arginine biosynthesis; N(2)-acetyl-L-ornithine from L-glutamate: step 3/4. In terms of biological role, catalyzes the NADPH-dependent reduction of N-acetyl-5-glutamyl phosphate to yield N-acetyl-L-glutamate 5-semialdehyde. The protein is N-acetyl-gamma-glutamyl-phosphate reductase of Campylobacter jejuni subsp. jejuni serotype O:23/36 (strain 81-176).